A 152-amino-acid chain; its full sequence is SsrA-binding protein (152 aa).

Belongs to the SmpB family.

The protein resides in the cytoplasm. Functionally, required for rescue of stalled ribosomes mediated by trans-translation. Binds to transfer-messenger RNA (tmRNA), required for stable association of tmRNA with ribosomes. tmRNA and SmpB together mimic tRNA shape, replacing the anticodon stem-loop with SmpB. tmRNA is encoded by the ssrA gene; the 2 termini fold to resemble tRNA(Ala) and it encodes a 'tag peptide', a short internal open reading frame. During trans-translation Ala-aminoacylated tmRNA acts like a tRNA, entering the A-site of stalled ribosomes, displacing the stalled mRNA. The ribosome then switches to translate the ORF on the tmRNA; the nascent peptide is terminated with the 'tag peptide' encoded by the tmRNA and targeted for degradation. The ribosome is freed to recommence translation, which seems to be the essential function of trans-translation. The sequence is that of SsrA-binding protein from Persephonella marina (strain DSM 14350 / EX-H1).